The primary structure comprises 203 residues: GTP-binding protein YPTC1 (203 aa).

Residues 15-23 (GDSGVGKSC), 33-40 (YTESYIST), 63-67 (DTAGQ), 121-124 (NKSD), and 151-153 (SAK) each bind GTP. Positions 37–45 (YISTIGVDF) match the Effector region motif. A disordered region spans residues 174 to 203 (ASQPIPTKAGGPVVRPQEGKPINSKSSSCC). Residues Cys202 and Cys203 are each lipidated (S-geranylgeranyl cysteine).

The protein belongs to the small GTPase superfamily. Rab family.

The protein localises to the cell membrane. Protein transport. Probably involved in vesicular traffic. This chain is GTP-binding protein YPTC1 (YPTC1), found in Chlamydomonas reinhardtii (Chlamydomonas smithii).